A 131-amino-acid chain; its full sequence is UPF0382 inner membrane protein YgdD (131 aa).

Residues 1-4 (MTSR) are Periplasmic-facing. Residues 5–25 (FMLIFAAISGFIFVALGAFGA) form a helical membrane-spanning segment. Residues 26-64 (HVLSKTMGAVEMGWIQTGLEYQAFHTLAILGLAVAMQRR) lie on the Cytoplasmic side of the membrane. Residues 65–85 (ISIWFYWSSVFLALGTVLFSG) form a helical membrane-spanning segment. Topologically, residues 86 to 97 (SLYCLALSHLRL) are periplasmic. Residues 98–118 (WAFVTPVGGVSFLAGWALMLV) traverse the membrane as a helical segment. Topologically, residues 119–131 (GAIRLKRKGVSHE) are cytoplasmic.

It belongs to the UPF0382 family.

The protein resides in the cell inner membrane. This Escherichia coli O157:H7 protein is UPF0382 inner membrane protein YgdD (ygdD).